The following is a 156-amino-acid chain: Endogenous retrovirus group K member 10 Pro protein (156 aa).

In terms of domain architecture, Peptidase A2 spans 21–96; sequence FEGLVDTGAD…IPLNLWGRDL (76 aa). Aspartate 26 is an active-site residue. In terms of domain architecture, G-patch spans 111–156; that stretch reads YSPTSQKIMTKMGYIPGKGLGKNEDGIKVPVEAKINQEREGIGYPF.

It belongs to the peptidase A2 family. HERV class-II K(HML-2) subfamily. In terms of assembly, active as a homodimer. Autoproteolytically processed at the N-terminus. Expected C-terminal autoprocessing not detected. The sequence shown is that of the processed Pro protein.

The enzyme catalyses Processing at the authentic HIV-1 PR recognition site and release of the mature p17 matrix and the p24 capsid protein, as a result of the cleavage of the -SQNY-|-PIVQ- cleavage site.. Its activity is regulated as follows. Resistant to a number of clinically useful HIV-1 PR inhibitors. Inhibited by cyclic urea SD146. Its function is as follows. Retroviral proteases have roles in processing of the primary translation products and the maturation of the viral particle. Endogenous Pro proteins may have kept, lost or modified their original function during evolution. This endogenous protein has retained most of the characteristics of retroviral proteases. The sequence is that of Endogenous retrovirus group K member 10 Pro protein (ERVK-10) from Homo sapiens (Human).